The sequence spans 1058 residues: Carbamoyl phosphate synthase large chain (1058 aa).

The interval 1 to 401 (MPKRTDIQKI…SLLKACRSLE (401 aa)) is carboxyphosphate synthetic domain. Arg129, Arg169, Gly175, Gly176, Arg208, Ile210, Glu215, Gly241, Ile242, His243, Gln284, and Glu298 together coordinate ATP. One can recognise an ATP-grasp 1 domain in the interval 133 to 327 (KQLMEELEQP…IAKLAAKIAV (195 aa)). Mg(2+)-binding residues include Gln284, Glu298, and Asn300. The Mn(2+) site is built by Gln284, Glu298, and Asn300. The interval 402-546 (IGVHHNEIPE…YSTYGWENES (145 aa)) is oligomerization domain. Residues 547-929 (IRSDKESVLV…ALYKAFEASY (383 aa)) are carbamoyl phosphate synthetic domain. The ATP-grasp 2 domain maps to 671-861 (EQALKELDIP…MAQVATKLIL (191 aa)). The ATP site is built by Arg707, Ser746, Ile748, Glu752, Gly777, Val778, His779, Ser780, Gln820, and Glu832. Residues Gln820, Glu832, and Asn834 each contribute to the Mg(2+) site. Mn(2+) is bound by residues Gln820, Glu832, and Asn834. Residues 930 to 1058 (LHLPTFGNVV…ESRSFVTEAI (129 aa)) enclose the MGS-like domain. The segment at 930-1058 (LHLPTFGNVV…ESRSFVTEAI (129 aa)) is allosteric domain.

The protein belongs to the CarB family. As to quaternary structure, composed of two chains; the small (or glutamine) chain promotes the hydrolysis of glutamine to ammonia, which is used by the large (or ammonia) chain to synthesize carbamoyl phosphate. Tetramer of heterodimers (alpha,beta)4. The cofactor is Mg(2+). Mn(2+) is required as a cofactor.

The enzyme catalyses hydrogencarbonate + L-glutamine + 2 ATP + H2O = carbamoyl phosphate + L-glutamate + 2 ADP + phosphate + 2 H(+). The catalysed reaction is hydrogencarbonate + NH4(+) + 2 ATP = carbamoyl phosphate + 2 ADP + phosphate + 2 H(+). The protein operates within amino-acid biosynthesis; L-arginine biosynthesis; carbamoyl phosphate from bicarbonate: step 1/1. Its pathway is pyrimidine metabolism; UMP biosynthesis via de novo pathway; (S)-dihydroorotate from bicarbonate: step 1/3. Large subunit of the glutamine-dependent carbamoyl phosphate synthetase (CPSase). CPSase catalyzes the formation of carbamoyl phosphate from the ammonia moiety of glutamine, carbonate, and phosphate donated by ATP, constituting the first step of 2 biosynthetic pathways, one leading to arginine and/or urea and the other to pyrimidine nucleotides. The large subunit (synthetase) binds the substrates ammonia (free or transferred from glutamine from the small subunit), hydrogencarbonate and ATP and carries out an ATP-coupled ligase reaction, activating hydrogencarbonate by forming carboxy phosphate which reacts with ammonia to form carbamoyl phosphate. The chain is Carbamoyl phosphate synthase large chain from Streptococcus pneumoniae (strain P1031).